Reading from the N-terminus, the 284-residue chain is Proteasome subunit beta 1 (284 aa).

Positions 1–56 are cleaved as a propeptide — removed in mature form; by autocatalysis; sequence MASHDSYTGRLPGAFMNPGTSSFTEFLASYNPDLLPGRHMTALAGGMPGNVEAPHA. Thr57 serves as the catalytic Nucleophile.

The protein belongs to the peptidase T1B family. In terms of assembly, the 20S proteasome core is composed of 14 alpha and 14 beta subunits that assemble into four stacked heptameric rings, resulting in a barrel-shaped structure. The two inner rings, each composed of seven catalytic beta subunits, are sandwiched by two outer rings, each composed of seven alpha subunits. The catalytic chamber with the active sites is on the inside of the barrel. Has a gated structure, the ends of the cylinder being occluded by the N-termini of the alpha-subunits. Is capped by the proteasome-associated ATPase, ARC.

Its subcellular location is the cytoplasm. It catalyses the reaction Cleavage of peptide bonds with very broad specificity.. The protein operates within protein degradation; proteasomal Pup-dependent pathway. Its activity is regulated as follows. The formation of the proteasomal ATPase ARC-20S proteasome complex, likely via the docking of the C-termini of ARC into the intersubunit pockets in the alpha-rings, may trigger opening of the gate for substrate entry. Interconversion between the open-gate and close-gate conformations leads to a dynamic regulation of the 20S proteasome proteolysis activity. Its function is as follows. Component of the proteasome core, a large protease complex with broad specificity involved in protein degradation. The polypeptide is Proteasome subunit beta 1 (Thermomonospora curvata (strain ATCC 19995 / DSM 43183 / JCM 3096 / KCTC 9072 / NBRC 15933 / NCIMB 10081 / Henssen B9)).